The primary structure comprises 109 residues: uncharacterized protein (109 aa).

The stretch at 27–89 (KEEAHQFRDK…LKRIDELIAV (63 aa)) forms a coiled coil.

This is an uncharacterized protein from Streptococcus pneumoniae.